We begin with the raw amino-acid sequence, 81 residues long: Beta-catenin-interacting protein 1 (81 aa).

Ser59 is modified (phosphoserine).

It belongs to the CTNNBIP1 family. Binds CTNNB1. In terms of tissue distribution, highly expressed in heart, brain, liver and skeletal muscle. Detected at low levels in kidney, testis and lung.

It is found in the cytoplasm. It localises to the nucleus. Functionally, prevents the interaction between CTNNB1 and TCF family members, and acts as a negative regulator of the Wnt signaling pathway. The chain is Beta-catenin-interacting protein 1 (Ctnnbip1) from Mus musculus (Mouse).